The following is a 122-amino-acid chain: Class I hydrophobin 2 (122 aa).

An N-terminal signal peptide occupies residues 1–22; sequence MFARVSTLFAMFFLGLALMVSA. 4 disulfide bridges follow: Cys-40/Cys-101, Cys-47/Cys-95, Cys-48/Cys-81, and Cys-102/Cys-115.

The protein belongs to the fungal hydrophobin family. As to quaternary structure, self-assembles to form functional amyloid fibrils called rodlets. Self-assembly into fibrillar rodlets occurs spontaneously at hydrophobic:hydrophilic interfaces and the rodlets further associate laterally to form amphipathic monolayers.

Its subcellular location is the secreted. It localises to the cell wall. Functionally, aerial growth, conidiation, and dispersal of filamentous fungi in the environment rely upon a capability of their secreting small amphipathic proteins called hydrophobins (HPBs) with low sequence identity. Class I can self-assemble into an outermost layer of rodlet bundles on aerial cell surfaces, conferring cellular hydrophobicity that supports fungal growth, development and dispersal; whereas Class II form highly ordered films at water-air interfaces through intermolecular interactions but contribute nothing to the rodlet structure. Hah2 is a class I hydrophobin that is involved in aerial growth of mycelia, but does not play a role in pathogenesis. This chain is Class I hydrophobin 2, found in Heterobasidion annosum (Root rot fungus).